The primary structure comprises 263 residues: 3-methyl-2-oxobutanoate hydroxymethyltransferase (263 aa).

Residues D44 and D83 each coordinate Mg(2+). Residues 44 to 45 (DS), D83, and K112 contribute to the 3-methyl-2-oxobutanoate site. E114 contacts Mg(2+). The active-site Proton acceptor is the E181.

It belongs to the PanB family. In terms of assembly, homodecamer; pentamer of dimers. The cofactor is Mg(2+).

It localises to the cytoplasm. The enzyme catalyses 3-methyl-2-oxobutanoate + (6R)-5,10-methylene-5,6,7,8-tetrahydrofolate + H2O = 2-dehydropantoate + (6S)-5,6,7,8-tetrahydrofolate. Its pathway is cofactor biosynthesis; (R)-pantothenate biosynthesis; (R)-pantoate from 3-methyl-2-oxobutanoate: step 1/2. In terms of biological role, catalyzes the reversible reaction in which hydroxymethyl group from 5,10-methylenetetrahydrofolate is transferred onto alpha-ketoisovalerate to form ketopantoate. This is 3-methyl-2-oxobutanoate hydroxymethyltransferase from Nitrosospira multiformis (strain ATCC 25196 / NCIMB 11849 / C 71).